Consider the following 396-residue polypeptide: Elongation factor Tu (396 aa).

The region spanning 10–206 is the tr-type G domain; the sequence is KPHVNVGTIG…ALDTYIPEPE (197 aa). The segment at 19–26 is G1; that stretch reads GHVDHGKT. 19–26 lines the GTP pocket; sequence GHVDHGKT. Residue Thr26 coordinates Mg(2+). Positions 60–64 are G2; that stretch reads GITIN. The tract at residues 81–84 is G3; sequence DCPG. GTP is bound by residues 81-85 and 136-139; these read DCPGH and NKCD. A G4 region spans residues 136–139; it reads NKCD. The G5 stretch occupies residues 174–176; sequence SAL.

The protein belongs to the TRAFAC class translation factor GTPase superfamily. Classic translation factor GTPase family. EF-Tu/EF-1A subfamily. Monomer.

It is found in the cytoplasm. It carries out the reaction GTP + H2O = GDP + phosphate + H(+). In terms of biological role, GTP hydrolase that promotes the GTP-dependent binding of aminoacyl-tRNA to the A-site of ribosomes during protein biosynthesis. The polypeptide is Elongation factor Tu (Acinetobacter baylyi (strain ATCC 33305 / BD413 / ADP1)).